Here is a 129-residue protein sequence, read N- to C-terminus: Lysozyme C (129 aa).

Positions lysine 1–leucine 129 constitute a C-type lysozyme domain. Disulfide bonds link cysteine 6–cysteine 127, cysteine 30–cysteine 115, cysteine 64–cysteine 80, and cysteine 76–cysteine 94. Residues glutamate 35 and aspartate 52 contribute to the active site.

Belongs to the glycosyl hydrolase 22 family. In terms of assembly, monomer.

The protein resides in the secreted. It catalyses the reaction Hydrolysis of (1-&gt;4)-beta-linkages between N-acetylmuramic acid and N-acetyl-D-glucosamine residues in a peptidoglycan and between N-acetyl-D-glucosamine residues in chitodextrins.. Its function is as follows. Lysozymes have primarily a bacteriolytic function; those in tissues and body fluids are associated with the monocyte-macrophage system and enhance the activity of immunoagents. The protein is Lysozyme C (LYZ) of Lophophorus impejanus (Himalayan monal pheasant).